We begin with the raw amino-acid sequence, 164 residues long: MPEPAKFAPAPKKGSKKAVTKAQKKDGKKRKRSRKESYSIYVYKVLKRVHPDTGIWCKAMGIMNSFLNDIFERIAGEASRLAHYNKRSTITSRRSRRPCACCCPASWPSTPCPRAPRRSPSTPAPSESLPGPGARSLPPSLPPRVAGCFVSKGSFQGHLTPLVK.

The segment covering 1 to 12 (MPEPAKFAPAPK) has biased composition (low complexity). Positions 1 to 33 (MPEPAKFAPAPKKGSKKAVTKAQKKDGKKRKRS) are disordered. At Pro-2 the chain carries N-acetylproline. N6-(2-hydroxyisobutyryl)lysine; alternate is present on Lys-6. N6-(beta-hydroxybutyryl)lysine; alternate is present on residues Lys-6 and Lys-12. Lys-6, Lys-12, and Lys-13 each carry N6-acetyllysine; alternate. Lys-6 bears the N6-butyryllysine; alternate mark. An N6-crotonyllysine; alternate mark is found at Lys-6, Lys-12, and Lys-13. Lys-6 and Lys-12 each carry N6-lactoyllysine; alternate. Lys-6 is covalently cross-linked (Glycyl lysine isopeptide (Lys-Gly) (interchain with G-Cter in SUMO2); alternate). An N6-(2-hydroxyisobutyryl)lysine; alternate modification is found at Lys-13. Ser-15 carries the phosphoserine; by STK4/MST1 modification. Residues Lys-16, Lys-17, Lys-21, and Lys-24 each carry the N6-acetyllysine; alternate modification. Lys-16, Lys-17, Lys-21, and Lys-24 each carry N6-crotonyllysine; alternate. 4 positions are modified to N6-lactoyllysine; alternate: Lys-16, Lys-17, Lys-21, and Lys-24. Lys-17 and Lys-21 each carry N6-(beta-hydroxybutyryl)lysine; alternate. Lys-17 carries the post-translational modification N6-glutaryllysine; alternate. N6-(2-hydroxyisobutyryl)lysine; alternate occurs at positions 21 and 24. Lys-21 carries the post-translational modification N6-butyryllysine; alternate. Residue Lys-21 forms a Glycyl lysine isopeptide (Lys-Gly) (interchain with G-Cter in SUMO2); alternate linkage. The residue at position 25 (Lys-25) is an N6-(2-hydroxyisobutyryl)lysine. At Lys-35 the chain carries N6-(2-hydroxyisobutyryl)lysine; alternate. Lys-35 carries the post-translational modification N6-(beta-hydroxybutyryl)lysine; alternate. Lys-35 is modified (N6-crotonyllysine; alternate). Lys-35 is modified (N6-glutaryllysine; alternate). Lys-35 carries the N6-succinyllysine; alternate modification. Lys-35 participates in a covalent cross-link: Glycyl lysine isopeptide (Lys-Gly) (interchain with G-Cter in ubiquitin); alternate. Ser-37 carries the post-translational modification Phosphoserine; by AMPK. Residues Lys-44, Lys-47, and Lys-58 each carry the N6-(2-hydroxyisobutyryl)lysine; alternate modification. At Lys-44 the chain carries N6-lactoyllysine; alternate. N6-glutaryllysine; alternate occurs at positions 44 and 47. Residue Lys-47 is modified to N6-methyllysine; alternate. Position 58 is an N6,N6-dimethyllysine; alternate (Lys-58). Dimethylated arginine is present on Arg-80. Residue Lys-86 is modified to N6-(2-hydroxyisobutyryl)lysine; alternate. N6-(beta-hydroxybutyryl)lysine; alternate is present on Lys-86. N6-acetyllysine; alternate is present on Lys-86. At Lys-86 the chain carries N6-lactoyllysine; alternate. Lys-86 is subject to N6,N6,N6-trimethyllysine; alternate. An omega-N-methylarginine mark is found at Arg-87 and Arg-93. The tract at residues 111 to 140 (PCPRAPRRSPSTPAPSESLPGPGARSLPPS) is disordered.

It belongs to the histone H2B family. In terms of assembly, the nucleosome is a histone octamer containing two molecules each of H2A, H2B, H3 and H4 assembled in one H3-H4 heterotetramer and two H2A-H2B heterodimers. The octamer wraps approximately 147 bp of DNA. In terms of processing, phosphorylation at Ser-37 (H2BS36ph) by AMPK in response to stress promotes transcription. Phosphorylated on Ser-15 (H2BS14ph) by STK4/MST1 during apoptosis; which facilitates apoptotic chromatin condensation. Also phosphorylated on Ser-15 in response to DNA double strand breaks (DSBs), and in correlation with somatic hypermutation and immunoglobulin class-switch recombination. Crotonylation (Kcr) is specifically present in male germ cells and marks testis-specific genes in post-meiotic cells, including X-linked genes that escape sex chromosome inactivation in haploid cells. Crotonylation marks active promoters and enhancers and confers resistance to transcriptional repressors. It is also associated with post-meiotically activated genes on autosomes. Post-translationally, lactylated in macrophages by EP300/P300 by using lactoyl-CoA directly derived from endogenous or exogenous lactate, leading to stimulates gene transcription.

The protein resides in the nucleus. It localises to the chromosome. Its function is as follows. Core component of nucleosome. Nucleosomes wrap and compact DNA into chromatin, limiting DNA accessibility to the cellular machineries which require DNA as a template. Histones thereby play a central role in transcription regulation, DNA repair, DNA replication and chromosomal stability. DNA accessibility is regulated via a complex set of post-translational modifications of histones, also called histone code, and nucleosome remodeling. The chain is Putative histone H2B type 2-D from Homo sapiens (Human).